The following is a 306-amino-acid chain: D-alanine--D-alanine ligase (306 aa).

The ATP-grasp domain maps to 101–303; sequence KQVWQAVGLP…FSQLVVKILE (203 aa). 134–189 contributes to the ATP binding site; it reads FTHLGLPLIVKPSREGSSVGMSKVNTLSELPAALEEAFRHDDDILVEKWLSGPEYT. Residues Asp257, Glu270, and Asn272 each coordinate Mg(2+).

It belongs to the D-alanine--D-alanine ligase family. Mg(2+) is required as a cofactor. It depends on Mn(2+) as a cofactor.

The protein localises to the cytoplasm. The enzyme catalyses 2 D-alanine + ATP = D-alanyl-D-alanine + ADP + phosphate + H(+). It participates in cell wall biogenesis; peptidoglycan biosynthesis. Its function is as follows. Cell wall formation. This Pectobacterium carotovorum subsp. carotovorum (strain PC1) protein is D-alanine--D-alanine ligase.